The following is a 346-amino-acid chain: MNNQARTPAPSSARTSTSVRASTPTRTPTPLRTPTPVRTRTPIRTLTPVLTPSPAGTSPLVLTPAPAQIPTLVPTPALARIPRLVPPPAPAWIPTPVPTPVPVRNPTPVPTPARTLTPPVRVPAPAPAQLLAGIRAALPVLDSYLAPALPLDPPPEPAPELPLLPEEDPEPAPSLKLIPSVSSEAGPAPGPLPTRTPLAANSPGPTLDFTFRADPSAIGLADPPIPSPVPSPILGTIPSAISLQNCTETFPSSSENFALDKRVLIRVTYCGLUSYSLRYILLKKSLEQQFPNHLLFEEDRAAQATGEFEVFVNGRLVHSKKRGDGFVNESRLQKIVSVIDEEIKKR.

Disordered regions lie at residues 1–40 (MNNQ…VRTR) and 151–206 (LDPP…PGPT). Residues 151-162 (LDPPPEPAPELP) are compositionally biased toward pro residues. Residues 270–273 (CGLU) constitute a cross-link (cysteinyl-selenocysteine (Cys-Sec); redox-active). U273 is a non-standard amino acid (selenocysteine).

Belongs to the SelWTH family. Post-translationally, truncated SELENOV proteins produced by failed UGA/Sec decoding are ubiquitinated by the CRL2(APPBP2) complex, which recognizes the glycine (Gly) at the C-terminus of truncated SELENOV proteins. Testis specific.

In terms of biological role, may be involved in a redox-related process. In Homo sapiens (Human), this protein is Selenoprotein V.